The chain runs to 356 residues: Probable arabinogalactan endo-beta-1,4-galactanase A (356 aa).

The N-terminal stretch at 1–21 is a signal peptide; that stretch reads MLGKTVLLPLLVLLCHSLASA. Residue asparagine 133 is glycosylated (N-linked (GlcNAc...) asparagine). The active-site Proton donor is the glutamate 157. The active-site Nucleophile is glutamate 268.

It belongs to the glycosyl hydrolase 53 family.

Its subcellular location is the secreted. It carries out the reaction The enzyme specifically hydrolyzes (1-&gt;4)-beta-D-galactosidic linkages in type I arabinogalactans.. Endogalactanase involved in the degradation of plant cell wall polysaccharides, and more particularly of hairy regions of pectin. The polypeptide is Probable arabinogalactan endo-beta-1,4-galactanase A (galA) (Aspergillus fumigatus (strain ATCC MYA-4609 / CBS 101355 / FGSC A1100 / Af293) (Neosartorya fumigata)).